A 468-amino-acid chain; its full sequence is RUS family member 1 (468 aa).

Alanine 2 bears the N-acetylalanine mark. The residue at position 49 (threonine 49) is a Phosphothreonine. A helical membrane pass occupies residues 247 to 267; the sequence is LLMLPLVSGCPGFSLGCFFFL.

This sequence belongs to the RUS1 family.

It localises to the membrane. This chain is RUS family member 1 (Rusf1), found in Pongo abelii (Sumatran orangutan).